The primary structure comprises 1219 residues: MRSPRTRGRPGRPLSLLLALLCALRAKVCGASGQFELEILSMQNVNGELQNGNCCGGARNPGDRKCTRDECDTYFKVCLKEYQSRVTAGGPCSFGSGSTPVIGGNTFNLKASRGNDRNRIVLPFSFAWPRSYTLLVEAWDSSNDTIQPDSIIEKASHSGMINPSRQWQTLKQNTGIAHFEYQIRVTCDDHYYGFGCNKFCRPRDDFFGHYACDQNGNKTCMEGWMGPECNKAICRQGCSPKHGSCKLPGDCRCQYGWQGLYCDKCIPHPGCVHGTCNEPWQCLCETNWGGQLCDKDLNYCGTHQPCLNRGTCSNTGPDKYQCSCPEGYSGPNCEIAEHACLSDPCHNRGSCKETSSGFECECSPGWTGPTCSTNIDDCSPNNCSHGGTCQDLVNGFKCVCPPQWTGKTCQLDANECEAKPCVNARSCKNLIASYYCDCLPGWMGQNCDININDCLGQCQNDASCRDLVNGYRCICPPGYAGDHCERDIDECASNPCLNGGHCQNEINRFQCLCPTGFSGNLCQLDIDYCEPNPCQNGAQCYNRASDYFCKCPEDYEGKNCSHLKDHCRTTPCEVIDSCTVAMASNDTPEGVRYISSNVCGPHGKCKSESGGKFTCDCNKGFTGTYCHENINDCEGNPCTNGGTCIDGVNSYKCICSDGWEGAHCENNINDCSQNPCHYGGTCRDLVNDFYCDCKNGWKGKTCHSRDSQCDEATCNNGGTCYDEVDTFKCMCPGGWEGTTCNIARNSSCLPNPCHNGGTCVVNGDSFTCVCKEGWEGPICTQNTNDCSPHPCYNSGTCVDGDNWYRCECAPGFAGPDCRININECQSSPCAFGATCVDEINGYQCICPPGHSGAKCHEVSGRSCITMGRVILDGAKWDDDCNTCQCLNGRVACSKVWCGPRPCRLHKGHGECPNGQSCIPVLDDQCFVRPCTGAGECRSSSLQPVKTKCTSDSYYQDNCANITFTFNKEMMSPGLTTEHICSELRNLNILKNVSAEYSIYIACEPSLSANNEIHVAISAEDIRDDGNPVKEITDKIIDLVSKRDGNSSLIAAVAEVRVQRRPLKNRTDFLVPLLSSVLTVAWVCCLVTAFYWCVRKRRRKPSSHTHSAPEDNTTNNVREQLNQIKNPIEKHGANTVPIKDYENKNSKMSKIRTHNSEVEEDDMDKHQQKVRFAKQPVYTLVDREEKVPQRTPTKHPNWTNKQDNRDLESAQSLNRMEYIV.

Positions 1–33 (MRSPRTRGRPGRPLSLLLALLCALRAKVCGASG) are cleaved as a signal peptide. Over 34-1067 (QFELEILSMQ…QRRPLKNRTD (1034 aa)) the chain is Extracellular. The N-linked (GlcNAc...) asparagine glycan is linked to Asn-143. Residues 185–229 (VTCDDHYYGFGCNKFCRPRDDFFGHYACDQNGNKTCMEGWMGPEC) form the DSL domain. Disulfide bonds link Cys-187/Cys-196 and Cys-200/Cys-212. An important for interaction with NOTCH1 region spans residues 199 to 207 (FCRPRDDFF). Residue Asn-217 is glycosylated (N-linked (GlcNAc...) asparagine). 40 cysteine pairs are disulfide-bonded: Cys-220/Cys-229, Cys-234/Cys-245, Cys-238/Cys-251, Cys-253/Cys-262, Cys-265/Cys-276, Cys-271/Cys-282, Cys-284/Cys-293, Cys-300/Cys-312, Cys-306/Cys-322, Cys-324/Cys-333, Cys-340/Cys-351, Cys-345/Cys-360, Cys-362/Cys-371, Cys-378/Cys-389, Cys-383/Cys-398, Cys-400/Cys-409, Cys-416/Cys-427, Cys-421/Cys-436, Cys-438/Cys-447, Cys-454/Cys-464, Cys-458/Cys-473, Cys-475/Cys-484, Cys-491/Cys-502, Cys-496/Cys-511, Cys-513/Cys-522, Cys-529/Cys-540, Cys-534/Cys-549, Cys-551/Cys-560, Cys-578/Cys-605, Cys-599/Cys-615, Cys-617/Cys-626, Cys-633/Cys-644, Cys-638/Cys-653, Cys-655/Cys-664, Cys-671/Cys-682, Cys-676/Cys-691, Cys-693/Cys-702, Cys-709/Cys-720, Cys-714/Cys-729, and Cys-731/Cys-740. The EGF-like 1 domain occupies 230–263 (NKAICRQGCSPKHGSCKLPGDCRCQYGWQGLYCD). Residues 264–294 (KCIPHPGCVHGTCNEPWQCLCETNWGGQLCD) form the EGF-like 2; atypical domain. 2 EGF-like domains span residues 296-334 (DLNY…PNCE) and 336-372 (AEHA…PTCS). Positions 374-410 (NIDDCSPNNCSHGGTCQDLVNGFKCVCPPQWTGKTCQ) constitute an EGF-like 5; calcium-binding domain. The N-linked (GlcNAc...) asparagine glycan is linked to Asn-382. The EGF-like 6; calcium-binding domain occupies 412 to 448 (DANECEAKPCVNARSCKNLIASYYCDCLPGWMGQNCD). The EGF-like 7; calcium-binding domain maps to 450 to 485 (NINDCLGQCQNDASCRDLVNGYRCICPPGYAGDHCE). In terms of domain architecture, EGF-like 8; calcium-binding spans 487–523 (DIDECASNPCLNGGHCQNEINRFQCLCPTGFSGNLCQ). EGF-like domains are found at residues 525 to 561 (DIDY…KNCS) and 586 to 627 (DTPE…TYCH). N-linked (GlcNAc...) asparagine glycosylation occurs at Asn-559. In terms of domain architecture, EGF-like 11; calcium-binding spans 629-665 (NINDCEGNPCTNGGTCIDGVNSYKCICSDGWEGAHCE). The region spanning 667 to 703 (NINDCSQNPCHYGGTCRDLVNDFYCDCKNGWKGKTCH) is the EGF-like 12; calcium-binding domain. EGF-like domains are found at residues 705 to 741 (RDSQ…TTCN) and 744 to 780 (RNSS…PICT). Residue Asn-745 is glycosylated (N-linked (GlcNAc...) asparagine). 11 disulfide bridges follow: Cys-748–Cys-759, Cys-753–Cys-768, Cys-770–Cys-779, Cys-786–Cys-797, Cys-791–Cys-806, Cys-808–Cys-817, Cys-824–Cys-835, Cys-829–Cys-844, Cys-846–Cys-855, Cys-925–Cys-936, and Cys-948–Cys-958. One can recognise an EGF-like 15; calcium-binding domain in the interval 782–818 (NTNDCSPHPCYNSGTCVDGDNWYRCECAPGFAGPDCR). One can recognise an EGF-like 16; calcium-binding domain in the interval 820-856 (NINECQSSPCAFGATCVDEINGYQCICPPGHSGAKCH). 4 N-linked (GlcNAc...) asparagine glycosylation sites follow: Asn-960, Asn-991, Asn-1045, and Asn-1064. Residues 1068-1093 (FLVPLLSSVLTVAWVCCLVTAFYWCV) traverse the membrane as a helical segment. At 1094 to 1219 (RKRRRKPSSH…QSLNRMEYIV (126 aa)) the chain is on the cytoplasmic side. A disordered region spans residues 1182 to 1219 (REEKVPQRTPTKHPNWTNKQDNRDLESAQSLNRMEYIV). Residues 1189-1200 (RTPTKHPNWTNK) show a composition bias toward polar residues.

As to quaternary structure, interacts with NOTCH1. Interacts with NOTCH2 and NOTCH3. As to expression, widely expressed in a variety of tissues.

The protein resides in the membrane. It is found in the cell membrane. Its function is as follows. Ligand for multiple Notch receptors and involved in the mediation of Notch signaling. May be involved in cell-fate decisions during hematopoiesis. Enhances fibroblast growth factor-induced angiogenesis (in vitro). Seems to be involved in early and late stages of mammalian cardiovascular development. Inhibits myoblast differentiation. May regulate fibroblast growth factor-induced angiogenesis. This is Protein jagged-1 (Jag1) from Rattus norvegicus (Rat).